Here is a 106-residue protein sequence, read N- to C-terminus: Small ribosomal subunit protein uS10 (106 aa).

It belongs to the universal ribosomal protein uS10 family. In terms of assembly, part of the 30S ribosomal subunit.

Involved in the binding of tRNA to the ribosomes. The polypeptide is Small ribosomal subunit protein uS10 (Parasynechococcus marenigrum (strain WH8102)).